The sequence spans 224 residues: Probable amino-acid permease protein YxeN (224 aa).

6 helical membrane-spanning segments follow: residues Thr-3–Thr-23, Leu-24–Ile-44, Leu-58–Gly-78, Ala-91–Phe-111, Phe-157–Ala-177, and Phe-190–Leu-210. Residues Leu-20 to Gln-211 form the ABC transmembrane type-1 domain.

The protein belongs to the binding-protein-dependent transport system permease family. As to quaternary structure, the complex is composed of two ATP-binding proteins (YxeO), two transmembrane proteins (YxeN) and a solute-binding protein (YxeM).

It localises to the cell membrane. Its function is as follows. Probably part of the ABC transporter complex YxeMNO that could be involved in amino-acid import. May transport S-methylcysteine. Probably responsible for the translocation of the substrate across the membrane. The sequence is that of Probable amino-acid permease protein YxeN (yxeN) from Bacillus subtilis (strain 168).